Here is a 236-residue protein sequence, read N- to C-terminus: Large ribosomal subunit protein uL3 (236 aa).

Residues alanine 139 to lysine 163 are disordered.

It belongs to the universal ribosomal protein uL3 family. Part of the 50S ribosomal subunit. Forms a cluster with proteins L14 and L19.

One of the primary rRNA binding proteins, it binds directly near the 3'-end of the 23S rRNA, where it nucleates assembly of the 50S subunit. The sequence is that of Large ribosomal subunit protein uL3 from Anaeromyxobacter sp. (strain Fw109-5).